The chain runs to 139 residues: Putative pre-16S rRNA nuclease (139 aa).

This sequence belongs to the YqgF nuclease family.

The protein resides in the cytoplasm. Its function is as follows. Could be a nuclease involved in processing of the 5'-end of pre-16S rRNA. The polypeptide is Putative pre-16S rRNA nuclease (Streptococcus equi subsp. equi (strain 4047)).